The following is a 638-amino-acid chain: Threonine--tRNA ligase (638 aa).

Residues 1–61 (MPNIKLPDGS…ERDSELAILT (61 aa)) enclose the TGS domain. Positions 242–533 (DHRKLGRQLD…LIEHYAGAMP (292 aa)) are catalytic. The Zn(2+) site is built by cysteine 333, histidine 384, and histidine 510.

It belongs to the class-II aminoacyl-tRNA synthetase family. Homodimer. Zn(2+) serves as cofactor.

The protein localises to the cytoplasm. The enzyme catalyses tRNA(Thr) + L-threonine + ATP = L-threonyl-tRNA(Thr) + AMP + diphosphate + H(+). Its function is as follows. Catalyzes the attachment of threonine to tRNA(Thr) in a two-step reaction: L-threonine is first activated by ATP to form Thr-AMP and then transferred to the acceptor end of tRNA(Thr). Also edits incorrectly charged L-seryl-tRNA(Thr). The polypeptide is Threonine--tRNA ligase (Azoarcus sp. (strain BH72)).